The following is a 429-amino-acid chain: 3-phosphoshikimate 1-carboxyvinyltransferase (429 aa).

Residues lysine 20, serine 21, and arginine 25 each coordinate 3-phosphoshikimate. Lysine 20 is a phosphoenolpyruvate binding site. Glycine 89 and arginine 118 together coordinate phosphoenolpyruvate. Residues serine 164, serine 165, glutamine 166, serine 192, aspartate 311, and lysine 338 each coordinate 3-phosphoshikimate. A phosphoenolpyruvate-binding site is contributed by glutamine 166. Aspartate 311 serves as the catalytic Proton acceptor. Phosphoenolpyruvate contacts are provided by arginine 342 and arginine 384.

It belongs to the EPSP synthase family. In terms of assembly, monomer.

The protein localises to the cytoplasm. It carries out the reaction 3-phosphoshikimate + phosphoenolpyruvate = 5-O-(1-carboxyvinyl)-3-phosphoshikimate + phosphate. It functions in the pathway metabolic intermediate biosynthesis; chorismate biosynthesis. Functionally, catalyzes the transfer of the enolpyruvyl moiety of phosphoenolpyruvate (PEP) to the 5-hydroxyl of shikimate-3-phosphate (S3P) to produce enolpyruvyl shikimate-3-phosphate and inorganic phosphate. This is 3-phosphoshikimate 1-carboxyvinyltransferase from Methanococcus maripaludis (strain C6 / ATCC BAA-1332).